The following is a 279-amino-acid chain: Inorganic pyrophosphatase 2 (279 aa).

Asp12 serves as the catalytic Nucleophile. 2 residues coordinate Mg(2+): Asp12 and Asp14. Catalysis depends on Asp14, which acts as the Proton donor. Substrate contacts are provided by Asp23 and Asp98. Residue Asp182 participates in Mg(2+) binding.

The protein belongs to the HAD-like hydrolase superfamily. In terms of assembly, tetramer. Mg(2+) is required as a cofactor.

It catalyses the reaction diphosphate + H2O = 2 phosphate + H(+). Catalyzes the specific cleavage of pyrophosphate. This Arabidopsis thaliana (Mouse-ear cress) protein is Inorganic pyrophosphatase 2.